Consider the following 252-residue polypeptide: 2-succinyl-6-hydroxy-2,4-cyclohexadiene-1-carboxylate synthase (252 aa).

Belongs to the AB hydrolase superfamily. MenH family. In terms of assembly, monomer.

The enzyme catalyses 5-enolpyruvoyl-6-hydroxy-2-succinyl-cyclohex-3-ene-1-carboxylate = (1R,6R)-6-hydroxy-2-succinyl-cyclohexa-2,4-diene-1-carboxylate + pyruvate. It functions in the pathway quinol/quinone metabolism; 1,4-dihydroxy-2-naphthoate biosynthesis; 1,4-dihydroxy-2-naphthoate from chorismate: step 3/7. It participates in quinol/quinone metabolism; menaquinone biosynthesis. In terms of biological role, catalyzes a proton abstraction reaction that results in 2,5-elimination of pyruvate from 2-succinyl-5-enolpyruvyl-6-hydroxy-3-cyclohexene-1-carboxylate (SEPHCHC) and the formation of 2-succinyl-6-hydroxy-2,4-cyclohexadiene-1-carboxylate (SHCHC). This is 2-succinyl-6-hydroxy-2,4-cyclohexadiene-1-carboxylate synthase from Escherichia coli (strain K12 / MC4100 / BW2952).